The sequence spans 1568 residues: Pentafunctional AROM polypeptide (1568 aa).

Residues 1–380 (MSQVEKVSIL…YQLKAHEVSK (380 aa)) form a 3-dehydroquinate synthase region. NAD(+) contacts are provided by residues 43–45 (DSN), 81–84 (ENNK), 112–114 (GGV), and Asp117. Arg128 is a 7-phospho-2-dehydro-3-deoxy-D-arabino-heptonate binding site. 137–138 (TT) serves as a coordination point for NAD(+). Positions 144 and 150 each coordinate 7-phospho-2-dehydro-3-deoxy-D-arabino-heptonate. Residue Lys159 coordinates NAD(+). Residue Asn160 participates in 7-phospho-2-dehydro-3-deoxy-D-arabino-heptonate binding. Residues 177-180 (FLTT) and Asn188 contribute to the NAD(+) site. A Zn(2+)-binding site is contributed by Glu192. 7-phospho-2-dehydro-3-deoxy-D-arabino-heptonate-binding positions include 192 to 195 (EVVK) and Lys244. Glu254 serves as the catalytic Proton acceptor; for 3-dehydroquinate synthase activity. Residues 258 to 262 (RNLLN) and His265 contribute to the 7-phospho-2-dehydro-3-deoxy-D-arabino-heptonate site. His265 serves as a coordination point for Zn(2+). The active-site Proton acceptor; for 3-dehydroquinate synthase activity is the His269. 2 residues coordinate 7-phospho-2-dehydro-3-deoxy-D-arabino-heptonate: His281 and Lys352. His281 is a binding site for Zn(2+). The tract at residues 393–842 (VHPFQEETTP…WDVLHTKFGV (450 aa)) is EPSP synthase. The For EPSP synthase activity role is filled by Cys824. Residues 867–1056 (DKSIVVIGMR…VPKGRSFVLS (190 aa)) form a shikimate kinase region. 874-881 (GMRAAGKS) contacts ATP. The 3-dehydroquinase stretch occupies residues 1057-1267 (LACSDLNDIA…SGNGQLTVGE (211 aa)). Positions 1280–1568 (RRNFYIVGNP…VYEAVVDDNV (289 aa)) are shikimate dehydrogenase.

The protein in the N-terminal section; belongs to the sugar phosphate cyclases superfamily. Dehydroquinate synthase family. This sequence in the 2nd section; belongs to the EPSP synthase family. It in the 3rd section; belongs to the shikimate kinase family. In the 4th section; belongs to the type-I 3-dehydroquinase family. The protein in the C-terminal section; belongs to the shikimate dehydrogenase family. Homodimer. Requires Zn(2+) as cofactor.

The protein resides in the cytoplasm. The catalysed reaction is 7-phospho-2-dehydro-3-deoxy-D-arabino-heptonate = 3-dehydroquinate + phosphate. It carries out the reaction 3-dehydroquinate = 3-dehydroshikimate + H2O. It catalyses the reaction shikimate + NADP(+) = 3-dehydroshikimate + NADPH + H(+). The enzyme catalyses shikimate + ATP = 3-phosphoshikimate + ADP + H(+). The catalysed reaction is 3-phosphoshikimate + phosphoenolpyruvate = 5-O-(1-carboxyvinyl)-3-phosphoshikimate + phosphate. It functions in the pathway metabolic intermediate biosynthesis; chorismate biosynthesis; chorismate from D-erythrose 4-phosphate and phosphoenolpyruvate: step 2/7. The protein operates within metabolic intermediate biosynthesis; chorismate biosynthesis; chorismate from D-erythrose 4-phosphate and phosphoenolpyruvate: step 3/7. It participates in metabolic intermediate biosynthesis; chorismate biosynthesis; chorismate from D-erythrose 4-phosphate and phosphoenolpyruvate: step 4/7. Its pathway is metabolic intermediate biosynthesis; chorismate biosynthesis; chorismate from D-erythrose 4-phosphate and phosphoenolpyruvate: step 5/7. It functions in the pathway metabolic intermediate biosynthesis; chorismate biosynthesis; chorismate from D-erythrose 4-phosphate and phosphoenolpyruvate: step 6/7. In terms of biological role, the AROM polypeptide catalyzes 5 consecutive enzymatic reactions in prechorismate polyaromatic amino acid biosynthesis. The protein is Pentafunctional AROM polypeptide of Clavispora lusitaniae (strain ATCC 42720) (Yeast).